We begin with the raw amino-acid sequence, 160 residues long: Myosin regulatory light chain, smooth muscle (160 aa).

Serine 1 carries the post-translational modification Blocked amino end (Ser). Phosphoserine is present on serine 11. EF-hand domains follow at residues 20–55 (NQIQ…LGTA) and 88–123 (DPEE…MGDN). The Ca(2+) site is built by aspartate 33, asparagine 35, aspartate 37, and aspartate 44.

Functionally, in molluscan muscle, calcium regulation is associated with myosin rather than with actin. Muscle myosin contains two types of light chains: the catalytic light chain, essential for ATPase activity, and the regulatory light chain, a calcium-binding protein responsible for Ca(2+) dependent binding and Ca(2+) dependent Mg-ATPase activity. In Spisula sachalinensis (Sakhalin surf-clam), this protein is Myosin regulatory light chain, smooth muscle.